Consider the following 294-residue polypeptide: Flavin-dependent thymidylate synthase (294 aa).

Positions 27–250 constitute a ThyX domain; the sequence is GFIRVIDYMG…PFTYEAFEEY (224 aa). Residues threonine 73, 96 to 98, and glutamate 104 contribute to the FAD site; that span reads RHR. Residues 93 to 96, 104 to 108, and arginine 189 each bind dUMP; these read QWIR and EYSAR. The short motif at 96-106 is the ThyX motif element; the sequence is RHRTASVNEYS. Residues 205–207 and histidine 211 contribute to the FAD site; that span reads NLH. Arginine 216 is a binding site for dUMP. The active-site Involved in ionization of N3 of dUMP, leading to its activation is arginine 216.

Belongs to the thymidylate synthase ThyX family. Homotetramer. The cofactor is FAD.

The catalysed reaction is dUMP + (6R)-5,10-methylene-5,6,7,8-tetrahydrofolate + NADPH + H(+) = dTMP + (6S)-5,6,7,8-tetrahydrofolate + NADP(+). It participates in pyrimidine metabolism; dTTP biosynthesis. Functionally, catalyzes the reductive methylation of 2'-deoxyuridine-5'-monophosphate (dUMP) to 2'-deoxythymidine-5'-monophosphate (dTMP) while utilizing 5,10-methylenetetrahydrofolate (mTHF) as the methyl donor, and NADPH and FADH(2) as the reductant. The protein is Flavin-dependent thymidylate synthase of Rickettsia typhi (strain ATCC VR-144 / Wilmington).